We begin with the raw amino-acid sequence, 352 residues long: Chymopapain (352 aa).

The N-terminal stretch at 1 to 18 (MATMSSISKIIFLATCLI) is a signal peptide. The propeptide at 19 to 134 (IHMGLSSADF…EDFTYKHVTN (116 aa)) is activation peptide. N-linked (GlcNAc...) asparagine glycosylation occurs at asparagine 86. Cystine bridges form between cysteine 156-cysteine 197, cysteine 190-cysteine 229, and cysteine 287-cysteine 338. Cysteine 159 is a catalytic residue. Catalysis depends on residues histidine 293 and asparagine 313.

Belongs to the peptidase C1 family.

The catalysed reaction is Specificity similar to that of papain.. Functionally, cysteine proteinase with a high level of diversity in substrate specificity. The sequence is that of Chymopapain from Carica papaya (Papaya).